Consider the following 60-residue polypeptide: Large ribosomal subunit protein bL32 (60 aa).

Residues 1-19 (MAVPKRRTSKRRKRARNTH) show a composition bias toward basic residues. The interval 1–20 (MAVPKRRTSKRRKRARNTHK) is disordered.

It belongs to the bacterial ribosomal protein bL32 family.

The chain is Large ribosomal subunit protein bL32 from Gemmatimonas aurantiaca (strain DSM 14586 / JCM 11422 / NBRC 100505 / T-27).